Consider the following 312-residue polypeptide: Elongation factor Ts (312 aa).

The interval 80–83 is involved in Mg(2+) ion dislocation from EF-Tu; it reads TDFV.

It belongs to the EF-Ts family.

The protein localises to the cytoplasm. In terms of biological role, associates with the EF-Tu.GDP complex and induces the exchange of GDP to GTP. It remains bound to the aminoacyl-tRNA.EF-Tu.GTP complex up to the GTP hydrolysis stage on the ribosome. This is Elongation factor Ts from Paramagnetospirillum magneticum (strain ATCC 700264 / AMB-1) (Magnetospirillum magneticum).